A 415-amino-acid chain; its full sequence is Adenylosuccinate synthetase (415 aa).

GTP contacts are provided by residues 11-17 (GDEGKGK) and 39-41 (GHT). Asp-12 serves as the catalytic Proton acceptor. 2 residues coordinate Mg(2+): Asp-12 and Gly-39. Residues 12-15 (DEGK), 37-40 (NAGH), Thr-124, Arg-138, Gln-218, Thr-233, and Arg-297 contribute to the IMP site. Residue His-40 is the Proton donor of the active site. Position 293 to 299 (293 to 299 (TTTGRAR)) interacts with substrate. GTP is bound by residues Arg-299, 325 to 327 (KLD), and 403 to 405 (STS).

It belongs to the adenylosuccinate synthetase family. As to quaternary structure, homodimer. Mg(2+) is required as a cofactor.

Its subcellular location is the cytoplasm. It carries out the reaction IMP + L-aspartate + GTP = N(6)-(1,2-dicarboxyethyl)-AMP + GDP + phosphate + 2 H(+). Its pathway is purine metabolism; AMP biosynthesis via de novo pathway; AMP from IMP: step 1/2. Plays an important role in the de novo pathway of purine nucleotide biosynthesis. Catalyzes the first committed step in the biosynthesis of AMP from IMP. In Helicobacter hepaticus (strain ATCC 51449 / 3B1), this protein is Adenylosuccinate synthetase.